Consider the following 1149-residue polypeptide: ATP-dependent helicase/deoxyribonuclease subunit B (1149 aa).

The UvrD-like helicase ATP-binding domain occupies 1–276 (MAIRYIFGRA…INLDIEERKV (276 aa)). 8 to 15 (GRAGRGKS) contributes to the ATP binding site. The UvrD-like helicase C-terminal domain maps to 273-586 (ERKVLPKEKE…LVGSIERSKS (314 aa)). [4Fe-4S] cluster is bound by residues Cys-786, Cys-1105, Cys-1108, and Cys-1114.

Belongs to the helicase family. AddB/RexB type 1 subfamily. In terms of assembly, heterodimer of AddA and AddB. Mg(2+) serves as cofactor. It depends on [4Fe-4S] cluster as a cofactor.

Its function is as follows. The heterodimer acts as both an ATP-dependent DNA helicase and an ATP-dependent, dual-direction single-stranded exonuclease. Recognizes the chi site generating a DNA molecule suitable for the initiation of homologous recombination. The AddB subunit has 5' -&gt; 3' nuclease activity but not helicase activity. The chain is ATP-dependent helicase/deoxyribonuclease subunit B from Alkaliphilus metalliredigens (strain QYMF).